Consider the following 234-residue polypeptide: Uridylate kinase (234 aa).

10 to 11 contacts ATP; the sequence is GS. UMP is bound at residue glycine 44. Residues glycine 45 and arginine 49 each coordinate ATP. Residues aspartate 66 and 114–120 contribute to the UMP site; that span reads ITPAQTT. Threonine 140, tyrosine 146, and aspartate 149 together coordinate ATP.

It belongs to the UMP kinase family. Homohexamer.

The protein localises to the cytoplasm. It carries out the reaction UMP + ATP = UDP + ADP. Its pathway is pyrimidine metabolism; CTP biosynthesis via de novo pathway; UDP from UMP (UMPK route): step 1/1. Inhibited by UTP. Its function is as follows. Catalyzes the reversible phosphorylation of UMP to UDP. This chain is Uridylate kinase, found in Methanoculleus marisnigri (strain ATCC 35101 / DSM 1498 / JR1).